The chain runs to 146 residues: Basic phospholipase A2 beta-bungarotoxin A2 chain (146 aa).

An N-terminal signal peptide occupies residues 1 to 19 (MNPAHLLVLSAVCVSLLGA). Positions 20 to 27 (SNIPPQSL) are excised as a propeptide. 6 cysteine pairs are disulfide-bonded: Cys54-Cys145, Cys56-Cys72, Cys71-Cys126, Cys78-Cys119, Cys87-Cys112, and Cys105-Cys117. Positions 55, 57, and 59 each coordinate Ca(2+). Residue His75 is part of the active site. Residue Asp76 participates in Ca(2+) binding. Residue Asp120 is part of the active site.

Belongs to the phospholipase A2 family. Group I subfamily. D49 sub-subfamily. Heterodimer; disulfide-linked. The A chain has phospholipase A2 activity and the B chain shows homology with the basic protease inhibitors. It depends on Ca(2+) as a cofactor. As to expression, expressed by the venom gland.

Its subcellular location is the secreted. The catalysed reaction is a 1,2-diacyl-sn-glycero-3-phosphocholine + H2O = a 1-acyl-sn-glycero-3-phosphocholine + a fatty acid + H(+). Snake venom phospholipase A2 (PLA2) that inhibits neuromuscular transmission by blocking acetylcholine release from the nerve termini. PLA2 catalyzes the calcium-dependent hydrolysis of the 2-acyl groups in 3-sn-phosphoglycerides. This Bungarus flaviceps flaviceps (Red-headed krait) protein is Basic phospholipase A2 beta-bungarotoxin A2 chain.